A 443-amino-acid polypeptide reads, in one-letter code: Intermediate filament protein ifd-2 (443 aa).

A head region spans residues 1 to 58 (MTDPLNPTRLQNHPALARIIESGRTNLPTGITTSGALSAYAQNAAAIIRDNREREKVE). The IF rod domain maps to 55–405 (EKVEIADLNN…KLMENAEHLR (351 aa)). Residues 59 to 90 (IADLNNRLARYVEKVRFLEAQNRVLENDIGVF) are coil 1A. Positions 91–104 (RNAAHTHSERIAVY) are linker 1. The coil 1B stretch occupies residues 105 to 239 (FESEKASLFT…SQHDIAIREE (135 aa)). The tract at residues 240–257 (ISKARRDTTNKNRDYFHN) is linker 12. The interval 258-403 (ELHAAMKEIR…YRKLMENAEH (146 aa)) is coil 2. The tract at residues 404–443 (LRTTVQTHVTYNAPPPPLPQSGPRTTSYHAYGSAYNDSLL) is tail.

Belongs to the intermediate filament family.

The protein resides in the cytoplasm. In terms of biological role, cytoplasmic intermediate filaments provide mechanical strength to cells. Not essential protein. This chain is Intermediate filament protein ifd-2 (ifd-2), found in Caenorhabditis elegans.